The following is a 201-amino-acid chain: Probable quinol oxidase subunit 3 (201 aa).

Transmembrane regions (helical) follow at residues 20–40 (LGFW…FATL), 62–82 (LVLI…IAIY), 91–111 (LMMF…GFEI), 133–153 (FFIL…WAIC), and 172–192 (FIVS…FTAV).

It belongs to the cytochrome c oxidase subunit 3 family.

The protein resides in the cell membrane. It carries out the reaction 2 a quinol + O2 = 2 a quinone + 2 H2O. Functionally, catalyzes quinol oxidation with the concomitant reduction of oxygen to water. This Staphylococcus aureus (strain MSSA476) protein is Probable quinol oxidase subunit 3 (qoxC).